The following is a 74-amino-acid chain: Acyl carrier protein (74 aa).

The Carrier domain maps to 1 to 73; it reads MAVFEKVQEI…DLVAYVEEKT (73 aa). Ser35 is subject to O-(pantetheine 4'-phosphoryl)serine.

It belongs to the acyl carrier protein (ACP) family. In terms of processing, 4'-phosphopantetheine is transferred from CoA to a specific serine of apo-ACP by AcpS. This modification is essential for activity because fatty acids are bound in thioester linkage to the sulfhydryl of the prosthetic group.

It localises to the cytoplasm. The protein operates within lipid metabolism; fatty acid biosynthesis. Functionally, carrier of the growing fatty acid chain in fatty acid biosynthesis. This Streptococcus thermophilus (strain CNRZ 1066) protein is Acyl carrier protein.